Consider the following 228-residue polypeptide: Probable septum site-determining protein MinC (228 aa).

This sequence belongs to the MinC family. As to quaternary structure, interacts with MinD and FtsZ.

Cell division inhibitor that blocks the formation of polar Z ring septums. Rapidly oscillates between the poles of the cell to destabilize FtsZ filaments that have formed before they mature into polar Z rings. Prevents FtsZ polymerization. This is Probable septum site-determining protein MinC from Bacillus cytotoxicus (strain DSM 22905 / CIP 110041 / 391-98 / NVH 391-98).